Reading from the N-terminus, the 478-residue chain is Trigger factor (478 aa).

Residues 1 to 41 form a disordered region; sequence MAELADAPDLGSGARKGVRVRLPPPAPHKNGGKNESRGSGQ. The region spanning 197-279 is the PPIase FKBP-type domain; it reads GDMLVVEYEV…IKEIKKKVLP (83 aa). A compositionally biased stretch (basic and acidic residues) spans 455-472; that stretch reads VEQKQEEEKKEEKEEVKN. The tract at residues 455–478 is disordered; it reads VEQKQEEEKKEEKEEVKNESQGNT.

The protein belongs to the FKBP-type PPIase family. Tig subfamily.

The protein localises to the cytoplasm. It carries out the reaction [protein]-peptidylproline (omega=180) = [protein]-peptidylproline (omega=0). Its function is as follows. Involved in protein export. Acts as a chaperone by maintaining the newly synthesized protein in an open conformation. Functions as a peptidyl-prolyl cis-trans isomerase. The polypeptide is Trigger factor (Aquifex aeolicus (strain VF5)).